Here is an 86-residue protein sequence, read N- to C-terminus: Dynein light chain 1, cytoplasmic (86 aa).

This sequence belongs to the dynein light chain family. Homodimer. Cytoplasmic dynein consists of two catalytic heavy chains (HCs) and a number of non-catalytic subunits which present intermediate chains (ICs), light intermediate chains (LICs) and light chains (LCs). Component of the nuclear pore complex (NPC). NPC constitutes the exclusive means of nucleocytoplasmic transport. NPCs allow the passive diffusion of ions and small molecules and the active, nuclear transport receptor-mediated bidirectional transport of macromolecules such as proteins, RNAs, ribonucleoparticles (RNPs), and ribosomal subunits across the nuclear envelope. Due to its 8-fold rotational symmetry, all subunits are present with 8 copies or multiples thereof.

It localises to the cytoplasm. Its subcellular location is the cytoskeleton. The protein localises to the nucleus. The protein resides in the nuclear pore complex. Its function is as follows. Acts as one of several non-catalytic accessory components of the cytoplasmic dynein complex that are thought to be involved in linking dynein to cargos and to adapter proteins that regulate dynein function. Cytoplasmic dynein 1 acts as a motor for the intracellular retrograde motility of vesicles and organelles along microtubules. May play a role in changing or maintaining the spatial distribution of cytoskeletal structures. Also a component of the nuclear pore complex. This Candida glabrata (strain ATCC 2001 / BCRC 20586 / JCM 3761 / NBRC 0622 / NRRL Y-65 / CBS 138) (Yeast) protein is Dynein light chain 1, cytoplasmic (DYN2).